The chain runs to 364 residues: Endoglucanase A (364 aa).

Glutamate 169 serves as the catalytic Proton donor. Glutamate 293 (nucleophile) is an active-site residue.

This sequence belongs to the glycosyl hydrolase 5 (cellulase A) family.

It is found in the cytoplasm. The catalysed reaction is Endohydrolysis of (1-&gt;4)-beta-D-glucosidic linkages in cellulose, lichenin and cereal beta-D-glucans.. It carries out the reaction Endohydrolysis of (1-&gt;4)-beta-D-xylosidic linkages in xylans.. Hydrolyzes both carboxymethylcellulose and xylan. Probably has a role in hydrolyzing oligosaccharides derived from cellulose, which are transported across the cell wall. The protein is Endoglucanase A (celA) of Ruminococcus albus.